The primary structure comprises 223 residues: Endonuclease V (223 aa).

Residues aspartate 35 and aspartate 103 each contribute to the Mg(2+) site.

Belongs to the endonuclease V family. Mg(2+) is required as a cofactor.

It localises to the cytoplasm. The catalysed reaction is Endonucleolytic cleavage at apurinic or apyrimidinic sites to products with a 5'-phosphate.. In terms of biological role, DNA repair enzyme involved in the repair of deaminated bases. Selectively cleaves double-stranded DNA at the second phosphodiester bond 3' to a deoxyinosine leaving behind the intact lesion on the nicked DNA. The polypeptide is Endonuclease V (Shigella dysenteriae serotype 1 (strain Sd197)).